Here is a 378-residue protein sequence, read N- to C-terminus: Glutamate 5-kinase (378 aa).

K14 contacts ATP. S54, D141, and N153 together coordinate substrate. 173–174 (SD) provides a ligand contact to ATP. In terms of domain architecture, PUA spans 279–356 (AGRLTVDAGA…DEISAILGYD (78 aa)).

The protein belongs to the glutamate 5-kinase family.

It is found in the cytoplasm. It carries out the reaction L-glutamate + ATP = L-glutamyl 5-phosphate + ADP. It participates in amino-acid biosynthesis; L-proline biosynthesis; L-glutamate 5-semialdehyde from L-glutamate: step 1/2. Its function is as follows. Catalyzes the transfer of a phosphate group to glutamate to form L-glutamate 5-phosphate. This Brucella canis (strain ATCC 23365 / NCTC 10854 / RM-666) protein is Glutamate 5-kinase.